A 117-amino-acid chain; its full sequence is Ribosome-binding factor A (117 aa).

It belongs to the RbfA family. As to quaternary structure, monomer. Binds 30S ribosomal subunits, but not 50S ribosomal subunits or 70S ribosomes.

The protein localises to the cytoplasm. Functionally, one of several proteins that assist in the late maturation steps of the functional core of the 30S ribosomal subunit. Associates with free 30S ribosomal subunits (but not with 30S subunits that are part of 70S ribosomes or polysomes). Required for efficient processing of 16S rRNA. May interact with the 5'-terminal helix region of 16S rRNA. In Bacillus licheniformis (strain ATCC 14580 / DSM 13 / JCM 2505 / CCUG 7422 / NBRC 12200 / NCIMB 9375 / NCTC 10341 / NRRL NRS-1264 / Gibson 46), this protein is Ribosome-binding factor A.